Consider the following 132-residue polypeptide: Small ribosomal subunit protein uS8 (132 aa).

It belongs to the universal ribosomal protein uS8 family. Part of the 30S ribosomal subunit. Contacts proteins S5 and S12.

One of the primary rRNA binding proteins, it binds directly to 16S rRNA central domain where it helps coordinate assembly of the platform of the 30S subunit. In Bifidobacterium longum (strain NCC 2705), this protein is Small ribosomal subunit protein uS8.